Consider the following 492-residue polypeptide: N-succinylglutamate 5-semialdehyde dehydrogenase (492 aa).

220–225 contributes to the NAD(+) binding site; the sequence is GSANTG. Active-site residues include glutamate 243 and cysteine 277.

Belongs to the aldehyde dehydrogenase family. AstD subfamily.

It carries out the reaction N-succinyl-L-glutamate 5-semialdehyde + NAD(+) + H2O = N-succinyl-L-glutamate + NADH + 2 H(+). It participates in amino-acid degradation; L-arginine degradation via AST pathway; L-glutamate and succinate from L-arginine: step 4/5. Catalyzes the NAD-dependent reduction of succinylglutamate semialdehyde into succinylglutamate. The polypeptide is N-succinylglutamate 5-semialdehyde dehydrogenase (Escherichia coli O157:H7).